The primary structure comprises 1028 residues: MEEQVVNAIQIASNPSADQALKAQAFDYVNQLRSDPSGWQICLALFTKTPQHSEVVRHVALEVVNSAAQAGLIDPQALGYVRDGLMAYLRQVYAQETATPDSPGIQNKIAQTITFLFSALYGNGWESFFDDLLSLTYKSPSSTGRDNAPGIVFYLRVINSIHDEIGDVLVSRSRAEQDKANSLKDLIRMRDMQKIAGSWQEILSDWRDGNDIIVEMALKAVGSWVSWIDIGLVVNQTMLDLLFQQLARAQKADLRAGEDKVRDAAVDVFTEIVGKKMKAEDKVDMIIFLNLDTIVSQLSNSPPLHENRFTFKYDTDLAETVAKLVNITVCDIIRALENESTTPESKEKAGGLLQAFLPHILRYFSDEYDEVCSTVIPCVSDLLQYLRKIAKSNPALAAQHSSTLLPILKAIIAKMRYDETSSWGDEDDQADEAEFQELRKRLGVLQQSIAAVNEQLYIDAVSEVVGTTFENLRQSGAQVDWRDLDLALHEMFLFGDIAVKAGSLYTKGVPNNAAAERLVEMMMRMVESDIRSFTHPATQLGYMEICVRYSSFFLNHTQLIPGVLESFLQLIHHPIKKVKTRSWYLFQRLVKQLRAHIGNVAENVVGALGDLLVIRAELASEGSDGDDSDDHEGSVDAVFTSQLYLFEAVGIISSTPTVPTDKQALYAQSVLSPVFVDMEKNLAPAKANDERAVQQIHHDIMALGTLAKGFSDWVPGTHSPASLPAAEVSEVFLQASEATLVALESLKGSFSVRTAARFAFSRLIGVLGSRILPQLPRWIDGLMTQTSSRDEMALFLRLLDQVIFGFKGEIYGILDALLTPFLQRVFSGIADPTTGTDDEIHLAELKREYINFLLAVLNNDLGAVIISERNQPMFDTVITTIEHFAKDVEDYTTAKMAFSLLSKMGSSWGGPDITPDGANGATAQQVALPGFGQFMITRMSPLCWALPATPSFNSKDAQAKQVLAEAGGLQRTIYGKTGMEYIEYLRDRELPSMGMGAELVEEFVGALSRLDLKGFRQFFPSFIQRLSA.

This sequence belongs to the exportin family.

The protein localises to the nucleus. It localises to the cytoplasm. In terms of biological role, tRNA nucleus export receptor which facilitates tRNA translocation across the nuclear pore complex. Involved in pre-tRNA splicing, probably by affecting the interaction of pre-tRNA with splicing endonuclease. This is Exportin-T (los1) from Aspergillus terreus (strain NIH 2624 / FGSC A1156).